The following is a 237-amino-acid chain: N-(5'-phosphoribosyl)anthranilate isomerase (237 aa).

It belongs to the TrpF family.

The catalysed reaction is N-(5-phospho-beta-D-ribosyl)anthranilate = 1-(2-carboxyphenylamino)-1-deoxy-D-ribulose 5-phosphate. It functions in the pathway amino-acid biosynthesis; L-tryptophan biosynthesis; L-tryptophan from chorismate: step 3/5. This is N-(5'-phosphoribosyl)anthranilate isomerase (TRP1) from Komagataella pastoris (Yeast).